We begin with the raw amino-acid sequence, 77 residues long: Large ribosomal subunit protein bL28 (77 aa).

The protein belongs to the bacterial ribosomal protein bL28 family.

The protein is Large ribosomal subunit protein bL28 of Albidiferax ferrireducens (strain ATCC BAA-621 / DSM 15236 / T118) (Rhodoferax ferrireducens).